The sequence spans 202 residues: FMN-dependent NADH:quinone oxidoreductase (202 aa).

Residues Ser9, 15–17 (SVS), 95–98 (MYNF), and 139–142 (SRGG) contribute to the FMN site.

It belongs to the azoreductase type 1 family. As to quaternary structure, homodimer. It depends on FMN as a cofactor.

The catalysed reaction is 2 a quinone + NADH + H(+) = 2 a 1,4-benzosemiquinone + NAD(+). The enzyme catalyses N,N-dimethyl-1,4-phenylenediamine + anthranilate + 2 NAD(+) = 2-(4-dimethylaminophenyl)diazenylbenzoate + 2 NADH + 2 H(+). Quinone reductase that provides resistance to thiol-specific stress caused by electrophilic quinones. Its function is as follows. Also exhibits azoreductase activity. Catalyzes the reductive cleavage of the azo bond in aromatic azo compounds to the corresponding amines. This is FMN-dependent NADH:quinone oxidoreductase from Laribacter hongkongensis (strain HLHK9).